Consider the following 347-residue polypeptide: UDP-N-acetylenolpyruvoylglucosamine reductase (347 aa).

In terms of domain architecture, FAD-binding PCMH-type spans 16–187 (AIEQCSHYLV…IAVGLKLPKT (172 aa)). R163 is a catalytic residue. The active-site Proton donor is S233. E328 is a catalytic residue.

It belongs to the MurB family. The cofactor is FAD.

It is found in the cytoplasm. It catalyses the reaction UDP-N-acetyl-alpha-D-muramate + NADP(+) = UDP-N-acetyl-3-O-(1-carboxyvinyl)-alpha-D-glucosamine + NADPH + H(+). It participates in cell wall biogenesis; peptidoglycan biosynthesis. In terms of biological role, cell wall formation. The chain is UDP-N-acetylenolpyruvoylglucosamine reductase from Vibrio vulnificus (strain YJ016).